We begin with the raw amino-acid sequence, 305 residues long: Hepatitis A virus cellular receptor 1 homolog (305 aa).

A signal peptide spans 1 to 21; it reads MNQIQVFISGLILLLPGAVDS. In terms of domain architecture, Ig-like V-type spans 22-122; it reads YVEVKGVVGH…PGWFNDQKVT (101 aa). Residues 22 to 237 lie on the Extracellular side of the membrane; that stretch reads YVEVKGVVGH…GKPQKNPTKG (216 aa). 3 disulfide bridges follow: Cys-37-Cys-108, Cys-49-Cys-60, and Cys-55-Cys-107. The interval 129–185 is disordered; sequence PEIPTRPPTRPTTTRPTATGRPTTISTRSTHVPTSIRVSTSTPPTSTHTWTHKPEPT. Low complexity-rich tracts occupy residues 139–152 and 161–177; these read PTTT…RPTT and PTSI…STHT. Asn-208 is a glycosylation site (N-linked (GlcNAc...) asparagine). A helical membrane pass occupies residues 238–258; the sequence is FYVGICIAALLLLLLVSTVAI. Topologically, residues 259–305 are cytoplasmic; sequence TRYILMKRKSASLSVVAFRVSKIEALQNAAVVHSRAEDNIYIVEDRP.

This sequence belongs to the immunoglobulin superfamily. TIM family. As to quaternary structure, interacts with STAM. Interacts with SELPLG. As to expression, expressed by stimulated T-cells. Expressed during primary antigen stimulation. Expressed at higher levels on B rather than T-cells, both constitutively and after activation.

The protein resides in the cell membrane. Phosphatidylserine receptor that plays an important functional role in regulatory B-cells homeostasis including generation, expansion and suppressor functions. As P-selectin/SELPLG ligand, plays a specialized role in activated but not naive T-cell trafficking during inflammatory responses. Controls thereby T-cell accumulation in the inflamed central nervous system (CNS) and the induction of autoimmune disease. Also regulates expression of various anti-inflammatory cytokines and co-inhibitory ligands including IL10. Acts as a regulator of T-cell proliferation. May play a role in kidney injury and repair. The chain is Hepatitis A virus cellular receptor 1 homolog (Havcr1) from Mus musculus (Mouse).